We begin with the raw amino-acid sequence, 374 residues long: Chaperone protein DnaJ (374 aa).

A J domain is found at 5–70; sequence DFYEILGVSK…EKRSAYDRMG (66 aa). A CR-type zinc finger spans residues 133-211; the sequence is GCKKEISFTA…CHGNGVKDKS (79 aa). Zn(2+)-binding residues include Cys146, Cys149, Cys163, Cys166, Cys185, Cys188, Cys199, and Cys202. 4 CXXCXGXG motif repeats span residues 146-153, 163-170, 185-192, and 199-206; these read CDTCDGKG, CQTCHGQG, CPHCGGTG, and CSDCHGNG.

Belongs to the DnaJ family. Homodimer. The cofactor is Zn(2+).

It localises to the cytoplasm. Functionally, participates actively in the response to hyperosmotic and heat shock by preventing the aggregation of stress-denatured proteins and by disaggregating proteins, also in an autonomous, DnaK-independent fashion. Unfolded proteins bind initially to DnaJ; upon interaction with the DnaJ-bound protein, DnaK hydrolyzes its bound ATP, resulting in the formation of a stable complex. GrpE releases ADP from DnaK; ATP binding to DnaK triggers the release of the substrate protein, thus completing the reaction cycle. Several rounds of ATP-dependent interactions between DnaJ, DnaK and GrpE are required for fully efficient folding. Also involved, together with DnaK and GrpE, in the DNA replication of plasmids through activation of initiation proteins. This Psychrobacter arcticus (strain DSM 17307 / VKM B-2377 / 273-4) protein is Chaperone protein DnaJ.